Here is a 125-residue protein sequence, read N- to C-terminus: Ribosome-binding factor A (125 aa).

It belongs to the RbfA family. As to quaternary structure, monomer. Binds 30S ribosomal subunits, but not 50S ribosomal subunits or 70S ribosomes.

It is found in the cytoplasm. In terms of biological role, one of several proteins that assist in the late maturation steps of the functional core of the 30S ribosomal subunit. Associates with free 30S ribosomal subunits (but not with 30S subunits that are part of 70S ribosomes or polysomes). Required for efficient processing of 16S rRNA. May interact with the 5'-terminal helix region of 16S rRNA. The polypeptide is Ribosome-binding factor A (Acidovorax sp. (strain JS42)).